The sequence spans 329 residues: Sulfate/thiosulfate import ATP-binding protein CysA (329 aa).

The ABC transporter domain maps to 3 to 237; the sequence is IEIRNVSKNF…PASDFVYHFL (235 aa). 35–42 provides a ligand contact to ATP; it reads GPSGCGKT.

The protein belongs to the ABC transporter superfamily. Sulfate/tungstate importer (TC 3.A.1.6) family. The complex is composed of two ATP-binding proteins (CysA), two transmembrane proteins (CysT and CysW) and a solute-binding protein (CysP).

The protein localises to the cell inner membrane. It catalyses the reaction sulfate(out) + ATP + H2O = sulfate(in) + ADP + phosphate + H(+). The enzyme catalyses thiosulfate(out) + ATP + H2O = thiosulfate(in) + ADP + phosphate + H(+). In terms of biological role, part of the ABC transporter complex CysAWTP involved in sulfate/thiosulfate import. Responsible for energy coupling to the transport system. This is Sulfate/thiosulfate import ATP-binding protein CysA from Pseudomonas aeruginosa (strain ATCC 15692 / DSM 22644 / CIP 104116 / JCM 14847 / LMG 12228 / 1C / PRS 101 / PAO1).